The sequence spans 84 residues: Large ribosomal subunit protein bL27 (84 aa).

The segment at 1-22 is disordered; sequence MAHKKAGGSTRNGRDSESKRLG.

Belongs to the bacterial ribosomal protein bL27 family.

The sequence is that of Large ribosomal subunit protein bL27 from Shewanella baltica (strain OS223).